The chain runs to 91 residues: DNA-directed RNA polymerase subunit omega (91 aa).

Belongs to the RNA polymerase subunit omega family. As to quaternary structure, the RNAP catalytic core consists of 2 alpha, 1 beta, 1 beta' and 1 omega subunit. When a sigma factor is associated with the core the holoenzyme is formed, which can initiate transcription.

It catalyses the reaction RNA(n) + a ribonucleoside 5'-triphosphate = RNA(n+1) + diphosphate. Its function is as follows. Promotes RNA polymerase assembly. Latches the N- and C-terminal regions of the beta' subunit thereby facilitating its interaction with the beta and alpha subunits. This is DNA-directed RNA polymerase subunit omega from Syntrophus aciditrophicus (strain SB).